A 259-amino-acid chain; its full sequence is Eukaryotic translation initiation factor 4E1 (259 aa).

A disordered region spans residues 1–70; that stretch reads MQSDFHRMKN…TATTTAPAGD (70 aa). The segment covering 18-27 has biased composition (polar residues); it reads FKTSAPSTEQ. Basic and acidic residues predominate over residues 41 to 51; it reads EAKDVKPKEDP. Residues 54-70 show a composition bias toward low complexity; that stretch reads TGEPAGNTATTTAPAGD. MRNA is bound by residues 100–101, 146–147, and 199–204; these read WE and RGKSNK.

The protein belongs to the eukaryotic initiation factor 4E family. As to quaternary structure, eIF4F is a multi-subunit complex, the composition of which varies with external and internal environmental conditions. It is composed of at least eIF4A, eIF4E1 and eIF4G1. Recruited by cup in oocytes and in early embryos, preventing the interaction with eIF4G. The interaction with cup therefore prevents the translation of key transcripts such as oskar (osk) and nanos (nos) in some regions in the early embryo. Interacts with mxt. Interacts with 4E-T and Thor. Forms a RNP containing at least me31B, eIF4E1, cup, tral and pAbp; this interaction is required for the translational silencing of maternal mRNAs during the maternal-to-zygotic transition. Phosphorylation increases the ability of the protein to bind to mRNA caps and to form the eIF4F complex. Expressed at the posterior end of developing oocytes (at protein level). Preferential expression in the pole cells, at different developmental stages.

Its subcellular location is the cytoplasm. The protein localises to the cytoplasmic ribonucleoprotein granule. The protein resides in the nucleus. It is found in the nuclear body. Recognizes and binds the 7-methylguanosine (m7G)-containing mRNA cap during an early step in the initiation of protein synthesis and facilitates ribosome binding by inducing the unwinding of the mRNAs secondary structures. In 0-1 hour embryos, forms a complex with me31B, cup, tral and pAbp which binds to various mRNAs including maternal mRNAs, and down-regulates their expression during the maternal-to-zygotic transition. This Drosophila melanogaster (Fruit fly) protein is Eukaryotic translation initiation factor 4E1.